Reading from the N-terminus, the 472-residue chain is Transmembrane protein 8B (472 aa).

Positions 1 to 36 are disordered; sequence MNMPQSLGNQPLPPEPPSLGTPAEGPGTTSPPEHCW. Residues 1–233 lie on the Extracellular side of the membrane; the sequence is MNMPQSLGNQ…ADALTYGFQL (233 aa). N92 and N100 each carry an N-linked (GlcNAc...) asparagine glycan. One can recognise an EGF-like domain in the interval 182–221; the sequence is FLSPCVDDCGPYGQCKLLRTHNYLYAACECKAGWRGWGCT. 3 cysteine pairs are disulfide-bonded: C186–C196, C190–C209, and C211–C220. Residues 234–254 form a helical membrane-spanning segment; it reads LSTLLLCLSNLMFLPPVVLAI. The Cytoplasmic segment spans residues 255-257; sequence RSR. Residues 258-277 traverse the membrane as a helical segment; the sequence is YVLEAAVYTFTMFFSTFYHA. At 278 to 292 the chain is on the extracellular side; it reads CDQPGIVVFCIMDYD. Residues 293–313 traverse the membrane as a helical segment; it reads VLQFCDFLGSLMSVWVTVIAM. Residues 314-315 are Cytoplasmic-facing; it reads AR. A helical transmembrane segment spans residues 316-336; it reads LQPVVKQVLYLLGAMLLSMAL. Over 337–342 the chain is Extracellular; it reads QLDRHG. Residues 343–363 form a helical membrane-spanning segment; that stretch reads LWNLLGPSLFALGILATAWTV. Topologically, residues 364–379 are cytoplasmic; the sequence is RSVRRRHCYPPTWRRW. The chain crosses the membrane as a helical span at residues 380–400; the sequence is LFYLCPGSLIAGSAVLLYAFV. At 401–405 the chain is on the extracellular side; that stretch reads ETRDN. A helical membrane pass occupies residues 406 to 426; sequence YFYIHSIWHMLIAGSVGFLLP. Residues 427–472 lie on the Cytoplasmic side of the membrane; sequence PRAKTDHGVPSGARARGCGYQLCINEQEELGLVGPGGATVSSICAS.

This sequence belongs to the TMEM8 family. In terms of assembly, isoform 2 (via its cytoplasmic part) interacts with EZR. Post-translationally, isoform 2 is N-glycosylated.

The protein localises to the cell membrane. It localises to the cytoplasm. The protein resides in the nucleus. Its subcellular location is the mitochondrion. It is found in the endoplasmic reticulum. Its function is as follows. May function as a regulator of the EGFR pathway. Probable tumor suppressor which may function in cell growth, proliferation and adhesion. In Homo sapiens (Human), this protein is Transmembrane protein 8B (TMEM8B).